The primary structure comprises 190 residues: Ribosome maturation factor RimM (190 aa).

In terms of domain architecture, PRC barrel spans 95-177 (EDDEFFYTDL…AGLIDSPDDL (83 aa)). Positions 170-190 (LIDSPDDLTGKPPKPPGKTKE) are disordered. The segment covering 181 to 190 (PPKPPGKTKE) has biased composition (pro residues).

The protein belongs to the RimM family. As to quaternary structure, binds ribosomal protein uS19.

The protein resides in the cytoplasm. Its function is as follows. An accessory protein needed during the final step in the assembly of 30S ribosomal subunit, possibly for assembly of the head region. Essential for efficient processing of 16S rRNA. May be needed both before and after RbfA during the maturation of 16S rRNA. It has affinity for free ribosomal 30S subunits but not for 70S ribosomes. The polypeptide is Ribosome maturation factor RimM (Rhizobium rhizogenes (strain K84 / ATCC BAA-868) (Agrobacterium radiobacter)).